A 313-amino-acid chain; its full sequence is 4-hydroxy-3-methylbut-2-enyl diphosphate reductase (313 aa).

Position 12 (Cys12) interacts with [4Fe-4S] cluster. (2E)-4-hydroxy-3-methylbut-2-enyl diphosphate is bound by residues His41 and His74. Residues His41 and His74 each coordinate dimethylallyl diphosphate. Residues His41 and His74 each coordinate isopentenyl diphosphate. Cys96 serves as a coordination point for [4Fe-4S] cluster. Residue His124 participates in (2E)-4-hydroxy-3-methylbut-2-enyl diphosphate binding. His124 is a binding site for dimethylallyl diphosphate. His124 serves as a coordination point for isopentenyl diphosphate. The active-site Proton donor is the Glu126. Thr164 serves as a coordination point for (2E)-4-hydroxy-3-methylbut-2-enyl diphosphate. Cys194 provides a ligand contact to [4Fe-4S] cluster. The (2E)-4-hydroxy-3-methylbut-2-enyl diphosphate site is built by Ser222, Ser223, Asn224, and Ser266. Ser222, Ser223, Asn224, and Ser266 together coordinate dimethylallyl diphosphate. Ser222, Ser223, Asn224, and Ser266 together coordinate isopentenyl diphosphate.

This sequence belongs to the IspH family. Requires [4Fe-4S] cluster as cofactor.

The catalysed reaction is isopentenyl diphosphate + 2 oxidized [2Fe-2S]-[ferredoxin] + H2O = (2E)-4-hydroxy-3-methylbut-2-enyl diphosphate + 2 reduced [2Fe-2S]-[ferredoxin] + 2 H(+). It catalyses the reaction dimethylallyl diphosphate + 2 oxidized [2Fe-2S]-[ferredoxin] + H2O = (2E)-4-hydroxy-3-methylbut-2-enyl diphosphate + 2 reduced [2Fe-2S]-[ferredoxin] + 2 H(+). It participates in isoprenoid biosynthesis; dimethylallyl diphosphate biosynthesis; dimethylallyl diphosphate from (2E)-4-hydroxy-3-methylbutenyl diphosphate: step 1/1. The protein operates within isoprenoid biosynthesis; isopentenyl diphosphate biosynthesis via DXP pathway; isopentenyl diphosphate from 1-deoxy-D-xylulose 5-phosphate: step 6/6. Its function is as follows. Catalyzes the conversion of 1-hydroxy-2-methyl-2-(E)-butenyl 4-diphosphate (HMBPP) into a mixture of isopentenyl diphosphate (IPP) and dimethylallyl diphosphate (DMAPP). Acts in the terminal step of the DOXP/MEP pathway for isoprenoid precursor biosynthesis. This is 4-hydroxy-3-methylbut-2-enyl diphosphate reductase from Protochlamydia amoebophila (strain UWE25).